Consider the following 144-residue polypeptide: Cytochrome c oxidase subunit 4 isoform 1, mitochondrial (144 aa).

The Mitochondrial matrix segment spans residues 1 to 73 (SVVKSEDYAL…SFAEMNRGSN (73 aa)). Residue K4 is modified to N6-acetyllysine; alternate. K4 is modified (N6-succinyllysine; alternate). Phosphoserine is present on residues S31 and S33. N6-acetyllysine; alternate is present on K35. An N6-succinyllysine; alternate modification is found at K35. K42 is modified (N6-acetyllysine). The helical transmembrane segment at 74–99 (EWKTVVGAAMFFIGFTAILIILEKRY) threads the bilayer. The Mitochondrial intermembrane portion of the chain corresponds to 100–144 (VYGPLPHTFDKEWVAMQTKRMLDLKVNPVDGLASKWDYDKKEWKK).

This sequence belongs to the cytochrome c oxidase IV family. Component of the cytochrome c oxidase (complex IV, CIV), a multisubunit enzyme composed of 14 subunits. The complex is composed of a catalytic core of 3 subunits MT-CO1, MT-CO2 and MT-CO3, encoded in the mitochondrial DNA, and 11 supernumerary subunits COX4I, COX5A, COX5B, COX6A, COX6B, COX6C, COX7A, COX7B, COX7C, COX8 and NDUFA4, which are encoded in the nuclear genome. The complex exists as a monomer or a dimer and forms supercomplexes (SCs) in the inner mitochondrial membrane with NADH-ubiquinone oxidoreductase (complex I, CI) and ubiquinol-cytochrome c oxidoreductase (cytochrome b-c1 complex, complex III, CIII), resulting in different assemblies (supercomplex SCI(1)III(2)IV(1) and megacomplex MCI(2)III(2)IV(2)). Interacts with PHB2; the interaction decreases in absence of SPHK2. Interacts with AFG1L. Interacts with ABCB7; this interaction allows the regulation of cellular iron homeostasis and cellular reactive oxygen species (ROS) levels in cardiomyocytes. Interacts with FLVCR2; this interaction occurs in the absence of heme and is disrupted upon heme binding. Interacts with IRGC.

The protein localises to the mitochondrion inner membrane. It functions in the pathway energy metabolism; oxidative phosphorylation. Its function is as follows. Component of the cytochrome c oxidase, the last enzyme in the mitochondrial electron transport chain which drives oxidative phosphorylation. The respiratory chain contains 3 multisubunit complexes succinate dehydrogenase (complex II, CII), ubiquinol-cytochrome c oxidoreductase (cytochrome b-c1 complex, complex III, CIII) and cytochrome c oxidase (complex IV, CIV), that cooperate to transfer electrons derived from NADH and succinate to molecular oxygen, creating an electrochemical gradient over the inner membrane that drives transmembrane transport and the ATP synthase. Cytochrome c oxidase is the component of the respiratory chain that catalyzes the reduction of oxygen to water. Electrons originating from reduced cytochrome c in the intermembrane space (IMS) are transferred via the dinuclear copper A center (CU(A)) of subunit 2 and heme A of subunit 1 to the active site in subunit 1, a binuclear center (BNC) formed by heme A3 and copper B (CU(B)). The BNC reduces molecular oxygen to 2 water molecules using 4 electrons from cytochrome c in the IMS and 4 protons from the mitochondrial matrix. This Aotus azarae (Azara's night monkey) protein is Cytochrome c oxidase subunit 4 isoform 1, mitochondrial (COX4I1).